Here is a 564-residue protein sequence, read N- to C-terminus: Septation ring formation regulator EzrA (564 aa).

Residues 1–4 (MVLY) are Extracellular-facing. Residues 5–23 (IILAIIVIILIAVGVLFYL) form a helical membrane-spanning segment. Residues 24 to 564 (RSNKRQIIEK…KHIEEEVIKQ (541 aa)) are Cytoplasmic-facing. Coiled coils occupy residues 99 to 138 (SFNASQSEIDDANELMDSYEQSYQQQLEDVNEIIALYKDN), 190 to 223 (DGNYVQAHNHIAALNEQMKQLRSYMEEIPELIRE), 271 to 300 (LISRLELEEANDKLANINDKLDDMYDLIEH), 350 to 435 (VRQF…RRLL), and 471 to 550 (VKQL…ESVE).

This sequence belongs to the EzrA family.

It is found in the cell membrane. Its function is as follows. Negative regulator of FtsZ ring formation; modulates the frequency and position of FtsZ ring formation. Inhibits FtsZ ring formation at polar sites. Interacts either with FtsZ or with one of its binding partners to promote depolymerization. This is Septation ring formation regulator EzrA from Staphylococcus aureus (strain JH1).